The sequence spans 356 residues: sn-glycerol-3-phosphate import ATP-binding protein UgpC (356 aa).

Positions 4-235 (LKLQAVTKSW…PASRFVASFI (232 aa)) constitute an ABC transporter domain. Residue 37–44 (GPSGCGKS) coordinates ATP.

The protein belongs to the ABC transporter superfamily. sn-glycerol-3-phosphate importer (TC 3.A.1.1.3) family. In terms of assembly, the complex is composed of two ATP-binding proteins (UgpC), two transmembrane proteins (UgpA and UgpE) and a solute-binding protein (UgpB).

Its subcellular location is the cell inner membrane. It catalyses the reaction sn-glycerol 3-phosphate(out) + ATP + H2O = sn-glycerol 3-phosphate(in) + ADP + phosphate + H(+). In terms of biological role, part of the ABC transporter complex UgpBAEC involved in sn-glycerol-3-phosphate (G3P) import. Responsible for energy coupling to the transport system. This is sn-glycerol-3-phosphate import ATP-binding protein UgpC from Salmonella choleraesuis (strain SC-B67).